We begin with the raw amino-acid sequence, 293 residues long: Protease HtpX homolog (293 aa).

A run of 2 helical transmembrane segments spans residues 4-24 (IFLF…TLRV) and 40-60 (SLLI…LLIS). H146 lines the Zn(2+) pocket. E147 is a catalytic residue. H150 lines the Zn(2+) pocket. 2 helical membrane-spanning segments follow: residues 161–181 (LIQG…GYFI) and 197–217 (FITV…IVAW). Residue E223 participates in Zn(2+) binding.

The protein belongs to the peptidase M48B family. It depends on Zn(2+) as a cofactor.

The protein localises to the cell inner membrane. The sequence is that of Protease HtpX homolog from Bordetella petrii (strain ATCC BAA-461 / DSM 12804 / CCUG 43448).